The chain runs to 124 residues: Fluoride-specific ion channel FluC (124 aa).

Transmembrane regions (helical) follow at residues 4–24, 35–55, 62–82, and 95–115; these read VLFVALGGSIGAVLRYLISLL, FGTLVVNILGSFLMGVIFALG, PEFKAFIGVGMLGALTTFSTF, and LVKAVFNVVVNVGVCIFVVYL. Na(+) contacts are provided by Gly74 and Thr77.

Belongs to the fluoride channel Fluc/FEX (TC 1.A.43) family.

Its subcellular location is the cell inner membrane. The catalysed reaction is fluoride(in) = fluoride(out). With respect to regulation, na(+) is not transported, but it plays an essential structural role and its presence is essential for fluoride channel function. Its function is as follows. Fluoride-specific ion channel. Important for reducing fluoride concentration in the cell, thus reducing its toxicity. The chain is Fluoride-specific ion channel FluC from Shewanella pealeana (strain ATCC 700345 / ANG-SQ1).